Here is a 433-residue protein sequence, read N- to C-terminus: Steroid hormone receptor ERR2 (433 aa).

Residues 1-38 (MSSEDRHLGSSCGSFIKTEPSSPSSGIDALSHHSPSGS) are disordered. The interaction with NANOG stretch occupies residues 93 to 211 (YMLNAIPKRL…SPPAKKPLTK (119 aa)). The segment at residues 100 to 186 (KRLCLVCGDI…RVRGGRQKYK (87 aa)) is a DNA-binding region (nuclear receptor). 2 NR C4-type zinc fingers span residues 103-123 (CLVC…CEAC) and 139-163 (CPAT…FMKC). The segment at 203–433 (PPAKKPLTKI…LFLEMLEAKV (231 aa)) is essential for ESRRB transcriptional activity and interaction with NCOA3. Residues 208 to 432 (PLTKIVSNLL…KLFLEMLEAK (225 aa)) form the NR LBD domain.

Belongs to the nuclear hormone receptor family. NR3 subfamily. Binds DNA as a monomer. Interacts with NR0B1; represses ESRRB activity at the GATA6 promoter. Interacts with NANOG; reciprocally modulates their transcriptional activities and activates POU5F1 expression. Interacts with NCOA3; mediates the interaction between ESRRB and RNA polymerase II complexes and allows NCOA3 corecruitment to ESRRB, KLF4, NANOG, and SOX2 enhancer regions to trigger ESRRB-dependent gene activation involved in self-renewal and pluripotency. Interacts with KDM1A; co-occupes the core set of ESRRB targets including ELF5 and EOMES. Interacts with the multiprotein complex Integrator, at least composed of INTS1, INTS2, INTS3, INTS4, INTS5, INTS6, INTS7, INTS8, INTS9/RC74, INTS10, INTS11/CPSF3L and INTS12; ESRRB is probably not a core component of the integrator complex and associates to integrator via its interaction with INTS1 and INTS9; attracts the transcriptional machinery. Interacts with JARID2. Interacts with POU5F1; recruits ESRRB near the POU5F1-SOX2 element in the NANOG proximal promoter leading to activation of NANOG expression; the interaction is DNA independent. Acetylated by PCAF/KAT2 (in vitro). Highly expressed in undifferentiated ESCs. Expressed in immature horizontal cells and in rod photoreceptors at intermediate and late stages of differentiation. Expressed in endolymph-producing epithelial cells.

The protein localises to the nucleus. The protein resides in the cytoplasm. It is found in the chromosome. Transcription factor that binds a canonical ESRRB recognition (ERRE) sequence 5'TCAAGGTCA-3' localized on promoter and enhancer of targets genes regulating their expression or their transcriptional activity. Plays a role, in a LIF-independent manner, in maintainance of self-renewal and pluripotency of embryonic and trophoblast stem cells through different signaling pathways including FGF signaling pathway and Wnt signaling pathways. Involved in morula development (2-16 cells embryos) by acting as a regulator at the 8-cell stage. Upon FGF signaling pathway activation, interacts with KDM1A by directly binding to enhancer site of ELF5 and EOMES and activating their transcription leading to self-renewal of trophoblast stem cells. Also regulates expression of multiple rod-specific genes and is required for survival of this cell type. Plays a role as transcription factor activator of GATA6, NR0B1, POU5F1 and PERM1. Plays a role as transcription factor repressor of NFE2L2 transcriptional activity and ESR1 transcriptional activity. During mitosis remains bound to a subset of interphase target genes, including pluripotency regulators, through the canonical ESRRB recognition (ERRE) sequence, leading to their transcriptional activation in early G1 phase. Can coassemble on structured DNA elements with other transcription factors like SOX2, POU5F1, KDM1A and NCOA3 to trigger ESRRB-dependent gene activation. This mechanism, in the case of SOX2 corecruitment prevents the embryonic stem cells (ESCs) to epiblast stem cells (EpiSC) transition through positive regulation of NR0B1 that inhibits the EpiSC transcriptional program. Also plays a role inner ear development by controlling expression of ion channels and transporters and in early placentation. The sequence is that of Steroid hormone receptor ERR2 from Mus musculus (Mouse).